We begin with the raw amino-acid sequence, 882 residues long: Alanine--tRNA ligase (882 aa).

The Zn(2+) site is built by His-574, His-578, Cys-682, and His-686. Positions 853–882 (GGRGGGKGALAQGGGLDPRKAREALPGLLP) are disordered. A compositionally biased stretch (gly residues) spans 854–868 (GRGGGKGALAQGGGL).

The protein belongs to the class-II aminoacyl-tRNA synthetase family. It depends on Zn(2+) as a cofactor.

The protein resides in the cytoplasm. The catalysed reaction is tRNA(Ala) + L-alanine + ATP = L-alanyl-tRNA(Ala) + AMP + diphosphate. Functionally, catalyzes the attachment of alanine to tRNA(Ala) in a two-step reaction: alanine is first activated by ATP to form Ala-AMP and then transferred to the acceptor end of tRNA(Ala). Also edits incorrectly charged Ser-tRNA(Ala) and Gly-tRNA(Ala) via its editing domain. The protein is Alanine--tRNA ligase of Thermus thermophilus (strain ATCC BAA-163 / DSM 7039 / HB27).